We begin with the raw amino-acid sequence, 509 residues long: Heat shock 70 kDa protein 14 (509 aa).

This sequence belongs to the heat shock protein 70 family. Component of ribosome-associated complex (RAC), a heterodimer composed of Hsp70/DnaK-type chaperone HSPA14 and Hsp40/DnaJ-type chaperone DNAJC2.

The protein resides in the cytoplasm. The protein localises to the cytosol. In terms of biological role, component of the ribosome-associated complex (RAC), a complex involved in folding or maintaining nascent polypeptides in a folding-competent state. In the RAC complex, binds to the nascent polypeptide chain, while DNAJC2 stimulates its ATPase activity. This Homo sapiens (Human) protein is Heat shock 70 kDa protein 14 (HSPA14).